The sequence spans 368 residues: Peptide chain release factor 2 (368 aa).

Q250 carries the post-translational modification N5-methylglutamine.

It belongs to the prokaryotic/mitochondrial release factor family. In terms of processing, methylated by PrmC. Methylation increases the termination efficiency of RF2.

The protein localises to the cytoplasm. In terms of biological role, peptide chain release factor 2 directs the termination of translation in response to the peptide chain termination codons UGA and UAA. The polypeptide is Peptide chain release factor 2 (Rickettsia felis (strain ATCC VR-1525 / URRWXCal2) (Rickettsia azadi)).